The following is a 305-amino-acid chain: tRNA uridine(34) hydroxylase (305 aa).

In terms of domain architecture, Rhodanese spans 136-230 (ADENTVVVDK…YLEEVPREQS (95 aa)). The active-site Cysteine persulfide intermediate is the C190.

The protein belongs to the TrhO family.

It catalyses the reaction uridine(34) in tRNA + AH2 + O2 = 5-hydroxyuridine(34) in tRNA + A + H2O. Functionally, catalyzes oxygen-dependent 5-hydroxyuridine (ho5U) modification at position 34 in tRNAs. The polypeptide is tRNA uridine(34) hydroxylase (Brucella melitensis biotype 1 (strain ATCC 23456 / CCUG 17765 / NCTC 10094 / 16M)).